A 253-amino-acid chain; its full sequence is Imidazole glycerol phosphate synthase subunit HisF (253 aa).

Residues aspartate 11 and aspartate 130 contribute to the active site.

It belongs to the HisA/HisF family. As to quaternary structure, heterodimer of HisH and HisF.

Its subcellular location is the cytoplasm. The enzyme catalyses 5-[(5-phospho-1-deoxy-D-ribulos-1-ylimino)methylamino]-1-(5-phospho-beta-D-ribosyl)imidazole-4-carboxamide + L-glutamine = D-erythro-1-(imidazol-4-yl)glycerol 3-phosphate + 5-amino-1-(5-phospho-beta-D-ribosyl)imidazole-4-carboxamide + L-glutamate + H(+). It functions in the pathway amino-acid biosynthesis; L-histidine biosynthesis; L-histidine from 5-phospho-alpha-D-ribose 1-diphosphate: step 5/9. Functionally, IGPS catalyzes the conversion of PRFAR and glutamine to IGP, AICAR and glutamate. The HisF subunit catalyzes the cyclization activity that produces IGP and AICAR from PRFAR using the ammonia provided by the HisH subunit. The protein is Imidazole glycerol phosphate synthase subunit HisF of Cereibacter sphaeroides (strain ATCC 17025 / ATH 2.4.3) (Rhodobacter sphaeroides).